A 360-amino-acid chain; its full sequence is Phospho-N-acetylmuramoyl-pentapeptide-transferase (360 aa).

10 consecutive transmembrane segments (helical) span residues Arg-25–Ile-45, Thr-73–Leu-93, Tyr-97–Tyr-117, Phe-135–Ala-155, Ile-170–Ala-190, Gly-199–Ser-219, Ala-236–Phe-256, Val-263–Ile-283, Met-288–Val-308, and Val-338–Lys-358.

It belongs to the glycosyltransferase 4 family. MraY subfamily. The cofactor is Mg(2+).

The protein resides in the cell inner membrane. The catalysed reaction is UDP-N-acetyl-alpha-D-muramoyl-L-alanyl-gamma-D-glutamyl-meso-2,6-diaminopimeloyl-D-alanyl-D-alanine + di-trans,octa-cis-undecaprenyl phosphate = di-trans,octa-cis-undecaprenyl diphospho-N-acetyl-alpha-D-muramoyl-L-alanyl-D-glutamyl-meso-2,6-diaminopimeloyl-D-alanyl-D-alanine + UMP. It functions in the pathway cell wall biogenesis; peptidoglycan biosynthesis. Functionally, catalyzes the initial step of the lipid cycle reactions in the biosynthesis of the cell wall peptidoglycan: transfers peptidoglycan precursor phospho-MurNAc-pentapeptide from UDP-MurNAc-pentapeptide onto the lipid carrier undecaprenyl phosphate, yielding undecaprenyl-pyrophosphoryl-MurNAc-pentapeptide, known as lipid I. The protein is Phospho-N-acetylmuramoyl-pentapeptide-transferase of Pseudomonas syringae pv. syringae (strain B728a).